The sequence spans 93 residues: Phosphoribosyl-ATP pyrophosphatase (93 aa).

It belongs to the PRA-PH family.

The protein localises to the cytoplasm. The enzyme catalyses 1-(5-phospho-beta-D-ribosyl)-ATP + H2O = 1-(5-phospho-beta-D-ribosyl)-5'-AMP + diphosphate + H(+). Its pathway is amino-acid biosynthesis; L-histidine biosynthesis; L-histidine from 5-phospho-alpha-D-ribose 1-diphosphate: step 2/9. The sequence is that of Phosphoribosyl-ATP pyrophosphatase from Mycolicibacterium gilvum (strain PYR-GCK) (Mycobacterium gilvum (strain PYR-GCK)).